The chain runs to 595 residues: Phytoene desaturase (595 aa).

An N-terminal signal peptide occupies residues 1–23 (MAETQRPRSAIIVGAGAGGIAVA). The helical transmembrane segment at 574–594 (SQRAFPLLVALMGVLYFLLFV) threads the bilayer.

This sequence belongs to the carotenoid/retinoid oxidoreductase family. It depends on NAD(+) as a cofactor.

Its subcellular location is the membrane. The catalysed reaction is 15-cis-phytoene + A = all-trans-phytofluene + AH2. The enzyme catalyses all-trans-phytofluene + A = all-trans-zeta-carotene + AH2. It catalyses the reaction all-trans-zeta-carotene + A = all-trans-neurosporene + AH2. It carries out the reaction all-trans-neurosporene + A = all-trans-lycopene + AH2. The catalysed reaction is all-trans-lycopene + A = all-trans-3,4-didehydrolycopene + AH2. It participates in carotenoid biosynthesis; lycopene biosynthesis. Its function is as follows. Phytoene desaturase involved in the carotenoid biosynthesis pathway. Converts phytoene into 3,4-didehydrolycopene via the intermediates phytofluene, zeta-carotene, neurosporene and lycopene, by introducing up to five double bonds into phytoene. Is also able to desaturate 1-hydroxyneurosporene into 1-hydroxylycopene and 1-hydroxylycopene into 1-hydroxy-3,4-didehydrolycopene. Gamma-carotene and 1,19-dihydroxylycopene are not accepted as substrates. Neurosporaxanthin is synthesized from geranyl-geranyl pyrophosphate (GGPP) through several enzymatic activities. Phytoene synthase activity performed by the bifunctional enzyme al-2 first produces phytoene from geranyl-geranyl pyrophosphate (GGPP). The phytoene dehydrogenase al-1 then introduces 5 desaturations to lead to 3,4-didehydrolycopene via the intermediates phytofluene, zeta-carotene, neurosporene and lycopene. Al-2 cyclase activity then converts 3,4-didehydrolycopene into torulene. Al-2 can also convet lycopene into gamma-carotene which in turn is converted to beta-carotene by an additional al-2 cyclization reaction. Torulene is the substrate of the dioxidase cao-2 that breaks the molecule, removing five carbon atoms to yield beta-apo-4'-carotenal, whereas the aldehyde dehydrogenase ylo-1 mediates the last step by converting beta-apo-4'-carotenal into neurosporaxanthin. The polypeptide is Phytoene desaturase (Neurospora crassa (strain ATCC 24698 / 74-OR23-1A / CBS 708.71 / DSM 1257 / FGSC 987)).